Consider the following 1594-residue polypeptide: RB1-inducible coiled-coil protein 1 (1594 aa).

A phosphoserine mark is found at serine 222, serine 229, and serine 237. Threonine 238 bears the Phosphothreonine mark. 5 positions are modified to phosphoserine: serine 243, serine 253, serine 257, serine 261, and serine 266. A Nuclear localization signal motif is present at residues 566–569 (KPRK). Phosphoserine is present on residues serine 624, serine 647, serine 650, serine 652, serine 653, serine 734, serine 1091, serine 1222, serine 1370, and serine 1484. Residues 638-673 (EQKASVSQTSPQSASSPRMESTAGITTTTSPRTPPP) are disordered. A compositionally biased stretch (low complexity) spans 641–654 (ASVSQTSPQSASSP). An FFAT motif is present at residues 731 to 737 (DFMSAVN). 2 coiled-coil regions span residues 859 to 1397 (LKEK…SSSF) and 1438 to 1485 (METS…SQSM).

It belongs to the ATG17 family. In terms of assembly, part of a complex consisting of ATG13/KIAA0652, ULK1 and RB1CC1. This complex associates with ATG101. Interacts with PTK2/FAK1 and PTK2B/PYK2. Interacts with GABARAP and GABARAPL1. Interacts with ATG16L1; the interaction is required for ULK1 complex-dependent autophagy. Interacts with RNF111, SKI and SMAD7. Interacts with COP1 in the cytoplasm of proliferating cells in response to UV stimulation. Interacts with TP53. Interacts with C9orf72. Interacts with WDR45B. Interacts with ATG13; this interaction is increased in the absence of TMEM39A. Interacts with WIPI2. Interacts with TAX1BP1. Interacts (via phosphorylated FFAT motif) with MOSPD2, VAPA and VAPB. Post-translationally, phosphorylation at Ser-734 of the FFAT motif activates interaction with MOSPD2, VAPA and VAPB. Expression levels correlated closely with those of RB1 in cancer cell lines as well as in various normal human tissues. Abundantly expressed in human musculoskeletal and cultured osteosarcoma cells.

It localises to the nucleus. It is found in the cytoplasm. The protein localises to the cytosol. The protein resides in the preautophagosomal structure. Its subcellular location is the lysosome. Its function is as follows. Involved in autophagy. Regulates early events but also late events of autophagosome formation through direct interaction with Atg16L1. Required for the formation of the autophagosome-like double-membrane structure that surrounds the Salmonella-containing vacuole (SCV) during S.typhimurium infection and subsequent xenophagy. Involved in repair of DNA damage caused by ionizing radiation, which subsequently improves cell survival by decreasing apoptosis. Inhibits PTK2/FAK1 and PTK2B/PYK2 kinase activity, affecting their downstream signaling pathways. Plays a role as a modulator of TGF-beta-signaling by restricting substrate specificity of RNF111. Functions as a DNA-binding transcription factor. Is a potent regulator of the RB1 pathway through induction of RB1 expression. Plays a crucial role in muscular differentiation. Plays an indispensable role in fetal hematopoiesis and in the regulation of neuronal homeostasis. This chain is RB1-inducible coiled-coil protein 1, found in Homo sapiens (Human).